Consider the following 107-residue polypeptide: MTKSELVAQLASRFPQLVLKDADFAVKTMLDAMSDALSKGHRIEIRGFGSFGLNRRPARVGRNPKSGEKVQVPEKFVPHFKPGKELRERVDGRAGEPLKADEPDDER.

Residues 78–107 (PHFKPGKELRERVDGRAGEPLKADEPDDER) form a disordered region. Residues 82-101 (PGKELRERVDGRAGEPLKAD) are compositionally biased toward basic and acidic residues.

It belongs to the bacterial histone-like protein family. As to quaternary structure, heterodimer of an alpha and a beta chain.

In terms of biological role, this protein is one of the two subunits of integration host factor, a specific DNA-binding protein that functions in genetic recombination as well as in transcriptional and translational control. The chain is Integration host factor subunit beta from Burkholderia multivorans (strain ATCC 17616 / 249).